A 1341-amino-acid polypeptide reads, in one-letter code: DNA-directed RNA polymerase subunit beta (1341 aa).

The protein belongs to the RNA polymerase beta chain family. In terms of assembly, the RNAP catalytic core consists of 2 alpha, 1 beta, 1 beta' and 1 omega subunit. When a sigma factor is associated with the core the holoenzyme is formed, which can initiate transcription.

It carries out the reaction RNA(n) + a ribonucleoside 5'-triphosphate = RNA(n+1) + diphosphate. Its function is as follows. DNA-dependent RNA polymerase catalyzes the transcription of DNA into RNA using the four ribonucleoside triphosphates as substrates. The sequence is that of DNA-directed RNA polymerase subunit beta from Blochmanniella pennsylvanica (strain BPEN).